A 201-amino-acid polypeptide reads, in one-letter code: Large ribosomal subunit protein uL4 (201 aa).

The disordered stretch occupies residues 44–71 (RAQKTRAEVTGSGKKPWRQKGTGRARSG).

Belongs to the universal ribosomal protein uL4 family. In terms of assembly, part of the 50S ribosomal subunit.

One of the primary rRNA binding proteins, this protein initially binds near the 5'-end of the 23S rRNA. It is important during the early stages of 50S assembly. It makes multiple contacts with different domains of the 23S rRNA in the assembled 50S subunit and ribosome. Its function is as follows. Forms part of the polypeptide exit tunnel. In Edwardsiella ictaluri (strain 93-146), this protein is Large ribosomal subunit protein uL4.